The sequence spans 69 residues: UPF0337 protein YjbJ (69 aa).

The protein belongs to the UPF0337 (CsbD) family.

The protein is UPF0337 protein YjbJ (yjbJ) of Escherichia coli O6:H1 (strain CFT073 / ATCC 700928 / UPEC).